The following is a 623-amino-acid chain: Sulfite reductase [NADPH] flavoprotein alpha-component (623 aa).

The tract at residues 1–32 (MSFQKNEYSHKNVSEDNNGQGGNPPIASPLND) is disordered. In terms of domain architecture, Flavodoxin-like spans 87–225 (LTIIFASQTG…AAEEWRKNAL (139 aa)). FMN-binding positions include 93–98 (SQTGNA), 140–143 (STNG), and 176–185 (LGDSSYEFFC). The FAD-binding FR-type domain occupies 258 to 472 (QNPYTATLLT…VEHNNNFKLP (215 aa)). FAD-binding positions include Thr346, Ala380, 410 to 413 (RLYS), 428 to 430 (TVG), Tyr434, and 443 to 446 (GGAS). Residues 543–544 (SR), 549–553 (KVYVQ), and Asp585 contribute to the NADP(+) site. Position 623 (Tyr623) interacts with FAD.

It belongs to the NADPH-dependent sulphite reductase flavoprotein subunit CysJ family. In the N-terminal section; belongs to the flavodoxin family. The protein in the C-terminal section; belongs to the flavoprotein pyridine nucleotide cytochrome reductase family. In terms of assembly, alpha(8)-beta(8). The alpha component is a flavoprotein, the beta component is a hemoprotein. The cofactor is FAD. Requires FMN as cofactor.

The enzyme catalyses hydrogen sulfide + 3 NADP(+) + 3 H2O = sulfite + 3 NADPH + 4 H(+). Its pathway is sulfur metabolism; hydrogen sulfide biosynthesis; hydrogen sulfide from sulfite (NADPH route): step 1/1. Component of the sulfite reductase complex that catalyzes the 6-electron reduction of sulfite to sulfide. This is one of several activities required for the biosynthesis of L-cysteine from sulfate. The flavoprotein component catalyzes the electron flow from NADPH -&gt; FAD -&gt; FMN to the hemoprotein component. This is Sulfite reductase [NADPH] flavoprotein alpha-component from Vibrio parahaemolyticus serotype O3:K6 (strain RIMD 2210633).